The sequence spans 476 residues: Glucan endo-1,3-beta-glucosidase 9 (476 aa).

The first 25 residues, methionine 1–alanine 25, serve as a signal peptide directing secretion. N-linked (GlcNAc...) asparagine glycosylation is found at asparagine 88 and asparagine 101. Glutamate 122 (proton donor) is an active-site residue. N-linked (GlcNAc...) asparagine glycans are attached at residues asparagine 184, asparagine 216, asparagine 277, asparagine 320, asparagine 342, asparagine 374, and asparagine 405. Cysteine 364 and cysteine 424 are joined by a disulfide. Serine 453 carries GPI-anchor amidated serine lipidation. The propeptide at serine 454 to phenylalanine 476 is removed in mature form.

This sequence belongs to the glycosyl hydrolase 17 family. Contains two additional disulfide bonds.

The protein localises to the secreted. It is found in the cell wall. The protein resides in the cell membrane. It carries out the reaction Hydrolysis of (1-&gt;3)-beta-D-glucosidic linkages in (1-&gt;3)-beta-D-glucans.. The chain is Glucan endo-1,3-beta-glucosidase 9 from Arabidopsis thaliana (Mouse-ear cress).